The primary structure comprises 193 residues: Ganglioside GM2 activator (193 aa).

A signal peptide spans 1–20 (MHRLPLLLLLGLLLAGSVAP). 4 cysteine pairs are disulfide-bonded: cysteine 39–cysteine 183, cysteine 99–cysteine 106, cysteine 112–cysteine 138, and cysteine 125–cysteine 136. The N-linked (GlcNAc...) asparagine glycan is linked to asparagine 151.

As to expression, widely expressed. Most abundant in kidney and testis.

The protein resides in the lysosome. It catalyses the reaction cholesterol(in) = cholesterol(out). In terms of biological role, binds gangliosides and stimulates ganglioside GM2 degradation. It stimulates only the breakdown of ganglioside GM2 and glycolipid GA2 by beta-hexosaminidase A. It extracts single GM2 molecules from membranes and presents them in soluble form to beta-hexosaminidase A for cleavage of N-acetyl-D-galactosamine and conversion to GM3. The large binding pocket can accommodate several single chain phospholipids and fatty acids, GM2A also exhibits some calcium-independent phospholipase activity. Has cholesterol transfer activity. In Mus musculus (Mouse), this protein is Ganglioside GM2 activator.